Reading from the N-terminus, the 440-residue chain is tRNA(Ile)-lysidine synthase (440 aa).

25 to 30 (SGGVDS) lines the ATP pocket.

It belongs to the tRNA(Ile)-lysidine synthase family.

It localises to the cytoplasm. It carries out the reaction cytidine(34) in tRNA(Ile2) + L-lysine + ATP = lysidine(34) in tRNA(Ile2) + AMP + diphosphate + H(+). Ligates lysine onto the cytidine present at position 34 of the AUA codon-specific tRNA(Ile) that contains the anticodon CAU, in an ATP-dependent manner. Cytidine is converted to lysidine, thus changing the amino acid specificity of the tRNA from methionine to isoleucine. This Vibrio cholerae serotype O1 (strain ATCC 39315 / El Tor Inaba N16961) protein is tRNA(Ile)-lysidine synthase.